A 253-amino-acid polypeptide reads, in one-letter code: Ubiquinone/menaquinone biosynthesis C-methyltransferase UbiE (253 aa).

Residues Thr-76, Asp-97, and 125-126 each bind S-adenosyl-L-methionine; that span reads NA.

The protein belongs to the class I-like SAM-binding methyltransferase superfamily. MenG/UbiE family.

The catalysed reaction is a 2-demethylmenaquinol + S-adenosyl-L-methionine = a menaquinol + S-adenosyl-L-homocysteine + H(+). It catalyses the reaction a 2-methoxy-6-(all-trans-polyprenyl)benzene-1,4-diol + S-adenosyl-L-methionine = a 5-methoxy-2-methyl-3-(all-trans-polyprenyl)benzene-1,4-diol + S-adenosyl-L-homocysteine + H(+). It participates in quinol/quinone metabolism; menaquinone biosynthesis; menaquinol from 1,4-dihydroxy-2-naphthoate: step 2/2. It functions in the pathway cofactor biosynthesis; ubiquinone biosynthesis. Its function is as follows. Methyltransferase required for the conversion of demethylmenaquinol (DMKH2) to menaquinol (MKH2) and the conversion of 2-polyprenyl-6-methoxy-1,4-benzoquinol (DDMQH2) to 2-polyprenyl-3-methyl-6-methoxy-1,4-benzoquinol (DMQH2). The protein is Ubiquinone/menaquinone biosynthesis C-methyltransferase UbiE of Bradyrhizobium sp. (strain BTAi1 / ATCC BAA-1182).